The following is a 475-amino-acid chain: UDP-glucosyltransferase UGT13248 (475 aa).

Over residues 1-17 (METTVTAVSGTTSSSVG) the composition is skewed to low complexity. A disordered region spans residues 1 to 20 (METTVTAVSGTTSSSVGHGA). Residues His-38, Ser-152, Thr-299, Cys-352, 369-377 (HCGWNSTLE), and 393-394 (DQ) contribute to the UDP-alpha-D-glucose site.

This sequence belongs to the UDP-glycosyltransferase family.

Functionally, involved in the detoxification of the Fusarium mycotoxin deoxynivalenol by the transfer of glucose from UDP-D-glucose to the hydroxyl group at C-3, forming deoxynivalenol-3-O-beta-D-glucoside. The protein is UDP-glucosyltransferase UGT13248 of Hordeum vulgare subsp. vulgare (Domesticated barley).